The chain runs to 263 residues: LIM and SH3 domain protein 1 (263 aa).

Methionine 1 is modified (N-acetylmethionine). The LIM zinc-binding domain occupies 5–56 (CARCGKIVYPTEKVNCLDKYWHKACFHCETCKMTLNMKNYKGYEKKPYCNAH). Position 42 is an N6-acetyllysine (lysine 42). 2 Nebulin repeats span residues 61 to 95 (SFTM…KNKG) and 97 to 131 (GFSV…KSRM). Position 68 is a phosphothreonine (threonine 68). Lysine 75 is modified (N6-methyllysine). Serine 99 carries the post-translational modification Phosphoserine. Threonine 104 bears the Phosphothreonine mark. An N6-succinyllysine modification is found at lysine 112. Serine 118 and serine 134 each carry phosphoserine. The tract at residues 123–207 (HEEFEKSRMG…QRSAPGGGGK (85 aa)) is disordered. Over residues 148–162 (DSSSYRRPTEQQQPQ) the composition is skewed to polar residues. Residue threonine 156 is modified to Phosphothreonine; by PKA. Positions 204–263 (GGGKRYRAVYDYSAADEDEVSFQDGDTIVNVQQIDDGWMYGTVERTGDTGMLPANYVEAI) constitute an SH3 domain.

As to quaternary structure, interacts with F-actin. Interacts with KBTBD10. Interacts with ANKRD54.

The protein localises to the cytoplasm. Its subcellular location is the cell cortex. It is found in the cytoskeleton. Its function is as follows. Plays an important role in the regulation of dynamic actin-based, cytoskeletal activities. Agonist-dependent changes in LASP1 phosphorylation may also serve to regulate actin-associated ion transport activities, not only in the parietal cell but also in certain other F-actin-rich secretory epithelial cell types. The chain is LIM and SH3 domain protein 1 (Lasp1) from Mus musculus (Mouse).